The following is a 223-amino-acid chain: Small ribosomal subunit protein uS3 (223 aa).

One can recognise a KH type-2 domain in the interval 39-117; that stretch reads IREHLRKKPS…RPELNAKLVA (79 aa).

It belongs to the universal ribosomal protein uS3 family. As to quaternary structure, part of the 30S ribosomal subunit. Forms a tight complex with proteins S10 and S14.

Its function is as follows. Binds the lower part of the 30S subunit head. Binds mRNA in the 70S ribosome, positioning it for translation. The protein is Small ribosomal subunit protein uS3 of Chlamydia felis (strain Fe/C-56) (Chlamydophila felis).